The following is a 316-amino-acid chain: MSKLNIIFAGTPDFAAQHLQALLDSEHNVIAVYTQPDKPAGRGKKLQASPVKQLAEQHNIPVYQPKSLRKEDAQAELKALNADVMVVVAYGLILPEAVLNAPKYGCLNVHGSLLPRWRGAAPIQRSIWAGDQETGVTIMQMDIGLDTGDMLHKVTTPIAADETSASLYAKLAELAPPALLEVLNGLESQAFKAEKQDDALSNYAEKLSKEEAKLDWNLTACQLERNIRAFNPWPISFLTLEVDGVEQSVKVYQANVLPHQAKAAGTVLQADKNGIQIATQEGVLNITQLQPSGKKPMSVQDFLNGRADWFAVGKQL.

Residue 112-115 (SLLP) coordinates (6S)-5,6,7,8-tetrahydrofolate.

This sequence belongs to the Fmt family.

The catalysed reaction is L-methionyl-tRNA(fMet) + (6R)-10-formyltetrahydrofolate = N-formyl-L-methionyl-tRNA(fMet) + (6S)-5,6,7,8-tetrahydrofolate + H(+). Attaches a formyl group to the free amino group of methionyl-tRNA(fMet). The formyl group appears to play a dual role in the initiator identity of N-formylmethionyl-tRNA by promoting its recognition by IF2 and preventing the misappropriation of this tRNA by the elongation apparatus. The protein is Methionyl-tRNA formyltransferase of Actinobacillus pleuropneumoniae serotype 5b (strain L20).